The following is a 121-amino-acid chain: Large ribosomal subunit protein bL20 (121 aa).

This sequence belongs to the bacterial ribosomal protein bL20 family.

Its function is as follows. Binds directly to 23S ribosomal RNA and is necessary for the in vitro assembly process of the 50S ribosomal subunit. It is not involved in the protein synthesizing functions of that subunit. This is Large ribosomal subunit protein bL20 from Wolbachia pipientis subsp. Culex pipiens (strain wPip).